Reading from the N-terminus, the 261-residue chain is Thiamine thiazole synthase (261 aa).

NAD(+) contacts are provided by residues A33, 52–53, G60, V124, and 152–154; these read ER and HVD. Fe cation is bound by residues D154 and H169. NAD(+) is bound at residue M219. R229 is a binding site for glycine.

Belongs to the THI4 family. In terms of assembly, homooctamer; tetramer of dimers. Requires Fe(2+) as cofactor.

The catalysed reaction is hydrogen sulfide + glycine + NAD(+) = ADP-5-ethyl-4-methylthiazole-2-carboxylate + nicotinamide + 3 H2O + H(+). The protein operates within cofactor biosynthesis; thiamine diphosphate biosynthesis. In terms of biological role, involved in the biosynthesis of the thiazole moiety of thiamine. Catalyzes the conversion of NAD and glycine to adenosine diphosphate 5-(2-hydroxyethyl)-4-methylthiazole-2-carboxylate (ADT), an adenylated thiazole intermediate, using free sulfide as a source of sulfur. In Pyrobaculum islandicum (strain DSM 4184 / JCM 9189 / GEO3), this protein is Thiamine thiazole synthase.